We begin with the raw amino-acid sequence, 375 residues long: MNESLKRTPLYELHLKLGARMVPFGGWEMPVQYSSVIEEHRAVREAAGLFDVSHMGEFEVRGPQALDLIQLVSTNDAAKLAVGRVQYALMCYENGTVVDDILIYRLDEHRYWLVVNAGNTQKDWEWINTARERAGLHNLELIDRSAEIALLALQGPKAEEILQPLATGVVLSQLEPFSLAKNVTVSGVPTLVLSRTGYTGEDGFEIYVKAEDVAALWEALLEAGDEQGLLPCGLGARDTLRFEAKLPLYGHEISDQHNPLEAGLGFAVKLKKGVDFIGRDALARIKEQGPTRKLVGIEMIDRGVPRQGYPVAVGGEVVGEVTTGSFSPTLEKNIALAYVPVAHSAVGTEVEVIIRGRALKARVVETPFYRSPHRR.

Belongs to the GcvT family. As to quaternary structure, the glycine cleavage system is composed of four proteins: P, T, L and H.

The catalysed reaction is N(6)-[(R)-S(8)-aminomethyldihydrolipoyl]-L-lysyl-[protein] + (6S)-5,6,7,8-tetrahydrofolate = N(6)-[(R)-dihydrolipoyl]-L-lysyl-[protein] + (6R)-5,10-methylene-5,6,7,8-tetrahydrofolate + NH4(+). Functionally, the glycine cleavage system catalyzes the degradation of glycine. This Symbiobacterium thermophilum (strain DSM 24528 / JCM 14929 / IAM 14863 / T) protein is Aminomethyltransferase.